The sequence spans 65 residues: Alpha-toxin OD1 (65 aa).

The LCN-type CS-alpha/beta domain occupies 3-65; that stretch reads RDAYIADDKN…VPIRIPGKCR (63 aa). An Important for toxin selectivity for individual Nav channel subtype (Nav1.6/SCN8A and Nav1.7/SCN9A), but not for toxin potency motif is present at residues 9 to 11; the sequence is DDK. Intrachain disulfides connect cysteine 13/cysteine 64, cysteine 17/cysteine 37, cysteine 23/cysteine 47, and cysteine 27/cysteine 49. Arginine 65 is modified (arginine amide).

Belongs to the long (4 C-C) scorpion toxin superfamily. Sodium channel inhibitor family. Alpha subfamily. As to expression, expressed by the venom gland.

It is found in the secreted. Its function is as follows. Alpha toxins bind voltage-independently at site-3 of sodium channels and inhibit the inactivation of the activated channels. The toxin affect mammalian sodium channels Nav1.7/SCN9A (EC(50)=4.5 nM), Nav1.4/SCN4A (EC(50)=9.6 nM), Nav1.6/SCN8A (EC(50)=30 nM), Nav1.5/SCN5A (only at micromolar concentrations), and insect sodium channel para/tipE (EC(50)=80 nM). In vivo, intraplantar administration of this toxin elicits pain behaviors, including licking and flinching of the hind paw. The chain is Alpha-toxin OD1 from Odontobuthus doriae (Yellow Iranian scorpion).